A 301-amino-acid polypeptide reads, in one-letter code: Homoserine O-acetyltransferase (301 aa).

The Acyl-thioester intermediate role is filled by C142. Residues K163 and S192 each coordinate substrate. The active-site Proton acceptor is the H235. E237 is a catalytic residue. R249 contributes to the substrate binding site.

It belongs to the MetA family.

It localises to the cytoplasm. It carries out the reaction L-homoserine + acetyl-CoA = O-acetyl-L-homoserine + CoA. It participates in amino-acid biosynthesis; L-methionine biosynthesis via de novo pathway; O-acetyl-L-homoserine from L-homoserine: step 1/1. Its function is as follows. Transfers an acetyl group from acetyl-CoA to L-homoserine, forming acetyl-L-homoserine. The protein is Homoserine O-acetyltransferase of Bacillus thuringiensis subsp. konkukian (strain 97-27).